Here is a 286-residue protein sequence, read N- to C-terminus: Elongation factor Ts (286 aa).

Positions Thr-79 to Val-82 are involved in Mg(2+) ion dislocation from EF-Tu.

This sequence belongs to the EF-Ts family.

It localises to the cytoplasm. In terms of biological role, associates with the EF-Tu.GDP complex and induces the exchange of GDP to GTP. It remains bound to the aminoacyl-tRNA.EF-Tu.GTP complex up to the GTP hydrolysis stage on the ribosome. This Wolbachia pipientis wMel protein is Elongation factor Ts.